The following is a 1250-amino-acid chain: TBC1 domain family member 9B (1250 aa).

GRAM domains lie at 142 to 209 and 288 to 356; these read LKMR…EKNA and ECYR…EKAD. Threonine 397 bears the Phosphothreonine mark. Positions 397–443 are disordered; sequence TPSKQPGSIGSRKASVVDPSTESSPAPQEGSEQPASPASPLSSRQSF. A phosphoserine mark is found at serine 411, serine 432, serine 435, and serine 463. Residues 414–443 show a composition bias toward polar residues; the sequence is DPSTESSPAPQEGSEQPASPASPLSSRQSF. A Rab-GAP TBC domain is found at 508–695; sequence GIPESLRGEL…VIVDCFFYEG (188 aa). The helical transmembrane segment at 668 to 688 threads the bilayer; it reads LSWFLTLFLSVMPFESAVVIV. An EF-hand domain is found at 879–914; sequence HTPLLAGRMFRLLDENKDSLINFKEFVTGMSGMYHG. Disordered regions lie at residues 974 to 999, 1069 to 1093, and 1128 to 1157; these read LPQE…PDYR, SART…ELHQ, and VEGG…MSSY. Positions 984–999 are enriched in basic and acidic residues; it reads SEERGEEKGTSSPDYR. Position 1241 is a phosphoserine (serine 1241).

It is found in the membrane. Its function is as follows. May act as a GTPase-activating protein for Rab family protein(s). The chain is TBC1 domain family member 9B (TBC1D9B) from Homo sapiens (Human).